Reading from the N-terminus, the 281-residue chain is UPF0273 protein PAE3143 (281 aa).

Residues 4 to 248 enclose the KaiC domain; sequence PRVRSYVPGL…YIKITGSSVR (245 aa). Position 31-38 (31-38) interacts with ATP; that stretch reads GGPGTGKS.

This sequence belongs to the UPF0273 family.

This chain is UPF0273 protein PAE3143, found in Pyrobaculum aerophilum (strain ATCC 51768 / DSM 7523 / JCM 9630 / CIP 104966 / NBRC 100827 / IM2).